Reading from the N-terminus, the 74-residue chain is Putative membrane protein insertion efficiency factor (74 aa).

It belongs to the UPF0161 family.

It is found in the cell inner membrane. In terms of biological role, could be involved in insertion of integral membrane proteins into the membrane. This Blochmanniella floridana protein is Putative membrane protein insertion efficiency factor.